The following is a 355-amino-acid chain: Elongation factor Ts (355 aa).

Residues 82-85 are involved in Mg(2+) ion dislocation from EF-Tu; that stretch reads TDFV.

It belongs to the EF-Ts family.

It is found in the cytoplasm. Its function is as follows. Associates with the EF-Tu.GDP complex and induces the exchange of GDP to GTP. It remains bound to the aminoacyl-tRNA.EF-Tu.GTP complex up to the GTP hydrolysis stage on the ribosome. The polypeptide is Elongation factor Ts (Helicobacter acinonychis (strain Sheeba)).